A 324-amino-acid polypeptide reads, in one-letter code: Alkanal monooxygenase beta chain (324 aa).

This sequence belongs to the bacterial luciferase oxidoreductase family. In terms of assembly, heterodimer of an alpha and a beta chain.

It carries out the reaction a long-chain fatty aldehyde + FMNH2 + O2 = a long-chain fatty acid + hnu + FMN + H2O + 2 H(+). Its function is as follows. Light-emitting reaction in luminous bacteria. The specific role of the beta subunit is unknown, but it is absolutely required for bioluminescence activity. In Vibrio harveyi (Beneckea harveyi), this protein is Alkanal monooxygenase beta chain (luxB).